Reading from the N-terminus, the 476-residue chain is Protein DETOXIFICATION 1 (476 aa).

Helical transmembrane passes span 35-55, 66-86, 117-137, 146-166, 184-204, 208-228, 260-280, 289-309, 331-351, 370-390, 402-422, and 433-453; these read AAPMATVTIAQYLLPVISVMV, GVALANSFTNVTGFSIMCGLV, IPICFLISILWLYIEKILISL, IAGSYAFWLIPALFGQAIVIP, AVTTLLFHVLVCWTLVFLFGL, GPAMATSVSFWFYAVILSCYV, AAMICLEWWLFEILILCSGLL, VLSICLTIETLHYVISAGVAA, VLAGLCLWIVESAFFSILLFT, VADLTPLLCLSFILDGFTAVL, IGAWNNTVSYYLVGAPVGIYL, and LWCGVVVGSTVQATILAIVTA.

The protein belongs to the multi antimicrobial extrusion (MATE) (TC 2.A.66.1) family. In terms of tissue distribution, ubiquitous. Highest expression in flowers and stems.

It is found in the cell membrane. Efflux carrier for plant-derived alkaloids, antibiotics, heavy metal and other toxic compounds. Involved in cadmium detoxification. Requires probably a proton-motive force for the efflux. The sequence is that of Protein DETOXIFICATION 1 from Arabidopsis thaliana (Mouse-ear cress).